Here is a 305-residue protein sequence, read N- to C-terminus: Energy-coupling factor transporter ATP-binding protein EcfA2 (305 aa).

Positions 13–262 (LQNVDITFTN…KNLLQELLIE (250 aa)) constitute an ABC transporter domain. 55 to 62 (GSTGSGKS) is a binding site for ATP.

Belongs to the ABC transporter superfamily. Energy-coupling factor EcfA family. Forms a stable energy-coupling factor (ECF) transporter complex composed of 2 membrane-embedded substrate-binding proteins (S component), 2 ATP-binding proteins (A component) and 2 transmembrane proteins (T component).

Its subcellular location is the cell membrane. In terms of biological role, ATP-binding (A) component of a common energy-coupling factor (ECF) ABC-transporter complex. Unlike classic ABC transporters this ECF transporter provides the energy necessary to transport a number of different substrates. This is Energy-coupling factor transporter ATP-binding protein EcfA2 from Spiroplasma kunkelii.